The sequence spans 247 residues: L-cystine import ATP-binding protein TcyC (247 aa).

An ABC transporter domain is found at Leu2–Leu240. Gly34–Thr41 contributes to the ATP binding site.

It belongs to the ABC transporter superfamily. L-cystine importer (TC 3.A.1.3.14) family. As to quaternary structure, the complex is composed of two ATP-binding proteins (TcyC), two transmembrane proteins (TcyB) and a solute-binding protein (TcyA).

It is found in the cell membrane. Functionally, part of the ABC transporter complex TcyABC involved in L-cystine import. Responsible for energy coupling to the transport system. This chain is L-cystine import ATP-binding protein TcyC (tcyC), found in Bacillus subtilis (strain 168).